A 754-amino-acid chain; its full sequence is 5-methyltetrahydropteroyltriglutamate--homocysteine methyltransferase (754 aa).

5-methyltetrahydropteroyltri-L-glutamate-binding positions include 17 to 20 (RELK) and Lys-117. Residues 431–433 (IGS) and Glu-484 contribute to the L-homocysteine site. Residues 431–433 (IGS) and Glu-484 contribute to the L-methionine site. 5-methyltetrahydropteroyltri-L-glutamate contacts are provided by residues 515–516 (RC) and Trp-561. Asp-599 is an L-homocysteine binding site. An L-methionine-binding site is contributed by Asp-599. 5-methyltetrahydropteroyltri-L-glutamate is bound at residue Glu-605. Residues His-641, Cys-643, and Glu-665 each contribute to the Zn(2+) site. His-694 functions as the Proton donor in the catalytic mechanism. Residue Cys-726 participates in Zn(2+) binding.

Belongs to the vitamin-B12 independent methionine synthase family. It depends on Zn(2+) as a cofactor.

The enzyme catalyses 5-methyltetrahydropteroyltri-L-glutamate + L-homocysteine = tetrahydropteroyltri-L-glutamate + L-methionine. It participates in amino-acid biosynthesis; L-methionine biosynthesis via de novo pathway; L-methionine from L-homocysteine (MetE route): step 1/1. Functionally, catalyzes the transfer of a methyl group from 5-methyltetrahydrofolate to homocysteine resulting in methionine formation. The polypeptide is 5-methyltetrahydropteroyltriglutamate--homocysteine methyltransferase (Salmonella typhimurium (strain LT2 / SGSC1412 / ATCC 700720)).